The chain runs to 450 residues: Tubulin alpha-3C chain (450 aa).

The MREC motif motif lies at methionine 1 to cysteine 4. Glutamine 11 is a GTP binding site. At lysine 40 the chain carries N6-acetyllysine. Glutamate 71, serine 140, glycine 144, threonine 145, threonine 179, asparagine 206, and asparagine 228 together coordinate GTP. Glutamate 71 contacts Mg(2+). Glutamate 254 is a catalytic residue. Tyrosine 282 carries the post-translational modification 3'-nitrotyrosine. Residue serine 439 is modified to Phosphoserine. Tyrosine 450 is subject to 3'-nitrotyrosine.

The protein belongs to the tubulin family. Dimer of alpha and beta chains. A typical microtubule is a hollow water-filled tube with an outer diameter of 25 nm and an inner diameter of 15 nM. Alpha-beta heterodimers associate head-to-tail to form protofilaments running lengthwise along the microtubule wall with the beta-tubulin subunit facing the microtubule plus end conferring a structural polarity. Microtubules usually have 13 protofilaments but different protofilament numbers can be found in some organisms and specialized cells. The cofactor is Mg(2+). Some glutamate residues at the C-terminus are polyglutamylated, resulting in polyglutamate chains on the gamma-carboxyl group. Polyglutamylation plays a key role in microtubule severing by spastin (SPAST). SPAST preferentially recognizes and acts on microtubules decorated with short polyglutamate tails: severing activity by SPAST increases as the number of glutamates per tubulin rises from one to eight, but decreases beyond this glutamylation threshold. Glutamylation is also involved in cilia motility. Post-translationally, some glutamate residues at the C-terminus are monoglycylated but not polyglycylated due to the absence of functional TTLL10 in human. Monoglycylation is mainly limited to tubulin incorporated into cilia and flagella axonemes, which is required for their stability and maintenance. Flagella glycylation controls sperm motility. Both polyglutamylation and monoglycylation can coexist on the same protein on adjacent residues, and lowering glycylation levels increases polyglutamylation, and reciprocally. In terms of processing, acetylation of alpha chains at Lys-40 is located inside the microtubule lumen. This modification has been correlated with increased microtubule stability, intracellular transport and ciliary assembly. Methylation of alpha chains at Lys-40 is found in mitotic microtubules and is required for normal mitosis and cytokinesis contributing to genomic stability. Post-translationally, nitration of Tyr-450 is irreversible and interferes with normal dynein intracellular distribution. In terms of processing, undergoes a tyrosination/detyrosination cycle, the cyclic removal and re-addition of a C-terminal tyrosine residue by the enzymes tubulin tyrosine carboxypeptidase (MATCAP1/KIAA0895L, VASH1 or VASH2) and tubulin tyrosine ligase (TTL), respectively. Tyrosination promotes microtubule interaction with CAP-Gly domain-containing proteins such as CLIP1, CLIP2 and DCTN1. Tyrosination regulates the initiation of dynein-dynactin motility via interaction with DCTN1, which brings the dynein-dynactin complex into contact with microtubules. In neurons, tyrosinated tubulins mediate the initiation of retrograde vesicle transport. Post-translationally, detyrosination is involved in metaphase plate congression by guiding chromosomes during mitosis: detyrosination promotes interaction with CENPE, promoting pole-proximal transport of chromosomes toward the equator. Detyrosination increases microtubules-dependent mechanotransduction in dystrophic cardiac and skeletal muscle. In cardiomyocytes, detyrosinated microtubules are required to resist to contractile compression during contraction: detyrosination promotes association with desmin (DES) at force-generating sarcomeres, leading to buckled microtubules and mechanical resistance to contraction. In terms of tissue distribution, expressed in testis.

The protein resides in the cytoplasm. The protein localises to the cytoskeleton. The catalysed reaction is GTP + H2O = GDP + phosphate + H(+). Tubulin is the major constituent of microtubules, a cylinder consisting of laterally associated linear protofilaments composed of alpha- and beta-tubulin heterodimers. Microtubules grow by the addition of GTP-tubulin dimers to the microtubule end, where a stabilizing cap forms. Below the cap, tubulin dimers are in GDP-bound state, owing to GTPase activity of alpha-tubulin. The chain is Tubulin alpha-3C chain (TUBA3C) from Homo sapiens (Human).